Here is a 40-residue protein sequence, read N- to C-terminus: Muscarinic m1-toxin4 (40 aa).

An intrachain disulfide couples C3 to C24.

Belongs to the three-finger toxin family. Short-chain subfamily. Aminergic toxin sub-subfamily. Monomer. Contains 4 disulfide bonds. In terms of tissue distribution, expressed by the venom gland.

The protein resides in the secreted. Binds irreversibly and specifically to M1 (CHRM1) muscarinic acetylcholine receptors, blocking further binding of antagonists and preventing the action of agonists. The chain is Muscarinic m1-toxin4 from Dendroaspis angusticeps (Eastern green mamba).